We begin with the raw amino-acid sequence, 261 residues long: 5'-nucleotidase SurE (261 aa).

D8, D9, S39, and N94 together coordinate a divalent metal cation.

This sequence belongs to the SurE nucleotidase family. Requires a divalent metal cation as cofactor.

It localises to the cytoplasm. The enzyme catalyses a ribonucleoside 5'-phosphate + H2O = a ribonucleoside + phosphate. In terms of biological role, nucleotidase that shows phosphatase activity on nucleoside 5'-monophosphates. The polypeptide is 5'-nucleotidase SurE (Archaeoglobus fulgidus (strain ATCC 49558 / DSM 4304 / JCM 9628 / NBRC 100126 / VC-16)).